A 542-amino-acid chain; its full sequence is Putative DEAD-box ATP-dependent RNA helicase 43 (542 aa).

Residues 97 to 125 (KNFMDMKFPSPLLRMLKDKGIMHPTPIQV) carry the Q motif motif. Residues 128-312 (LPVVLSGRDM…TSALVKPVTV (185 aa)) enclose the Helicase ATP-binding domain. Position 141–148 (141–148 (AFTGSGKT)) interacts with ATP. A DEAD box motif is present at residues 260-263 (DEAD). Residues 323-483 (DVIQEVEYVK…RIPPVLAELN (161 aa)) form the Helicase C-terminal domain. A CCHC-type zinc finger spans residues 499–516 (KGCAYCGGLGHRILQCPK).

The protein belongs to the DEAD box helicase family. DDX41 subfamily.

The enzyme catalyses ATP + H2O = ADP + phosphate + H(+). The chain is Putative DEAD-box ATP-dependent RNA helicase 43 (RH43) from Arabidopsis thaliana (Mouse-ear cress).